A 258-amino-acid polypeptide reads, in one-letter code: Aspartate/glutamate leucyltransferase (258 aa).

This sequence belongs to the R-transferase family. Bpt subfamily.

It localises to the cytoplasm. The enzyme catalyses N-terminal L-glutamyl-[protein] + L-leucyl-tRNA(Leu) = N-terminal L-leucyl-L-glutamyl-[protein] + tRNA(Leu) + H(+). It carries out the reaction N-terminal L-aspartyl-[protein] + L-leucyl-tRNA(Leu) = N-terminal L-leucyl-L-aspartyl-[protein] + tRNA(Leu) + H(+). In terms of biological role, functions in the N-end rule pathway of protein degradation where it conjugates Leu from its aminoacyl-tRNA to the N-termini of proteins containing an N-terminal aspartate or glutamate. This is Aspartate/glutamate leucyltransferase from Rhodopseudomonas palustris (strain BisA53).